Consider the following 148-residue polypeptide: SUMO-conjugating enzyme UBC9 (148 aa).

One can recognise a UBC core domain in the interval 1–147 (MASKRILKEL…ARTWTQKYAM (147 aa)). The Glycyl thioester intermediate role is filled by cysteine 85.

Belongs to the ubiquitin-conjugating enzyme family. Interacts with CHIP. Highest expression in young stems and old leaves. Lowest levels in floral buds, anthers and young leaves.

Its pathway is protein modification; protein sumoylation. Its function is as follows. Accepts the ubiquitin-like protein SUMO/SMT3 from the E1 complex and catalyzes its covalent attachment to other proteins. Mediates the selective degradation of short-lived and abnormal proteins. The chain is SUMO-conjugating enzyme UBC9 (UBC9) from Arabidopsis thaliana (Mouse-ear cress).